The chain runs to 270 residues: L-fucose dehydrogenase (270 aa).

The NAD(+) site is built by Arg19, Ile21, Asp40, Lys41, Asp62, Val63, Asn89, Tyr154, Lys158, Ile187, Thr189, and Leu191. Catalysis depends on Tyr154, which acts as the Proton acceptor.

It belongs to the short-chain dehydrogenases/reductases (SDR) family. Homotetramer. As to expression, highly expressed in brain, placenta, liver and kidney.

The protein localises to the cytoplasm. The enzyme catalyses L-fucose + NAD(+) = L-fucono-1,5-lactone + NADH + H(+). The catalysed reaction is D-arabinose + NAD(+) = D-arabinono-1,5-lactone + NADH + H(+). It carries out the reaction L-galactose + NAD(+) = L-galactono-1,5-lactone + NADH + H(+). The protein operates within carbohydrate degradation; L-fucose degradation. In terms of biological role, catalyzes the NAD(+)-dependent oxidation of L-fucose, yielding L-fucono-1,5-lactone, which rapidly converts spontaneously to L-fucone-1,4-lactone. Can also act on D-arabinose and L-galactose, with lower catalytic efficiency. Does not use NADPH. May be the initial enzyme of the L-fucose degradation pathway in mammals. This is L-fucose dehydrogenase from Homo sapiens (Human).